The chain runs to 102 residues: Carboxysome shell protein CcmK2 (102 aa).

Positions 4–90 (AVGMIETLGF…PHENLEYVLP (87 aa)) constitute a BMC domain.

It belongs to the bacterial microcompartments protein family. CcmK subfamily. As to quaternary structure, homohexamer. Interacts with CcmO in the carboxysome. Interacts with CcmN.

Its subcellular location is the carboxysome. Its function is as follows. One of the shell proteins of the carboxysome, a polyhedral inclusion where RuBisCO (ribulose bisphosphate carboxylase, rbcL-rbcS) is sequestered. Assembles into hexamers which make sheets that form the facets of the polyhedral carboxysome. The hexamer central pore probably regulates metabolite flux. Functionally, the major shell protein of the carboxysome, a polyhedral inclusion where RuBisCO (ribulose bisphosphate carboxylase, rbcL-rbcS) is sequestered. Hexamers make sheets that form the facets of the polyhedral carboxysome. The shell is 4.5 nm thick, as observed for CcmK hexamers. Required for recruitment of CcmO to the pre-carboxysome. In PCC 7942 there are several CcmK paralogs with presumably functional differences; replacing the central pore residues (34-37) with those of either CcmK4 from this organism (Tyr-Met-Arg-Ala) or from an alpha-type carboxysome forming cyanobacterium (CsoS1 of P.marinus strain MIT 9313, Arg-Glu-Phe-Val) allows the bacterium to make carboxysomes, but the expression level is too low to know if the carboxysome is functional for CO(2) fixation. Beta-carboxysome assembly initiates when soluble RuBisCO is condensed into a liquid matrix in a pre-carboxysome by the RbcS-like domains of probably both CcmM58 and CcmM35. CcmN interacts with the N-terminus of CcmM58, and then recruits the CcmK2 major shell protein via CcmN's encapsulation peptide. Shell formation requires CcmK proteins and CcmO. CcmL caps the otherwise elongated carboxysome. Once fully encapsulated carboxysomes are formed, they migrate within the cell probably via interactions with the cytoskeleton. This Synechococcus elongatus (strain ATCC 33912 / PCC 7942 / FACHB-805) (Anacystis nidulans R2) protein is Carboxysome shell protein CcmK2.